We begin with the raw amino-acid sequence, 148 residues long: UPF0735 ACT domain-containing protein Dred_1164 (148 aa).

Positions T72–Q147 constitute an ACT domain.

The protein belongs to the UPF0735 family.

The chain is UPF0735 ACT domain-containing protein Dred_1164 from Desulforamulus reducens (strain ATCC BAA-1160 / DSM 100696 / MI-1) (Desulfotomaculum reducens).